Reading from the N-terminus, the 143-residue chain is Hemoglobin subunit alpha-1 (143 aa).

An N-acetylserine modification is found at serine 2. Residues 2–143 (SLTAKDKDTV…LSRALAEKYR (142 aa)) form the Globin domain. Residue histidine 60 coordinates O2. Residue histidine 89 participates in heme b binding.

The protein belongs to the globin family. Hb1 is a heterotetramer of two alpha-1 chains and two beta-1 chains. As to expression, red blood cells.

Involved in oxygen transport from gills to the various peripheral tissues. This Anarhichas minor (Arctic spotted wolffish) protein is Hemoglobin subunit alpha-1 (hba1).